We begin with the raw amino-acid sequence, 360 residues long: Archaemetzincin-2 (360 aa).

H254 contributes to the Zn(2+) binding site. Catalysis depends on E255, which acts as the Proton acceptor. Residues H258, H264, C265, C270, C289, and C292 each coordinate Zn(2+).

The protein belongs to the peptidase M54 family. Zn(2+) serves as cofactor.

Probable zinc metalloprotease. This chain is Archaemetzincin-2 (AMZ2), found in Pongo abelii (Sumatran orangutan).